The sequence spans 243 residues: MSMLCYTLIIVFLIGIWAAPKSEDNVPLGSPATSDLSDTSCAQTHEGLKTSRNTDQRHPAPKKAEDQELGSAANIIVDPKLFQKRRFQSPRVLFSTQPPPLSRDEQSVEFLDNEDTLNRNIRAKRETHPVHNLGEYSVCDSISVWVANKTEAMDIKGKPVTVMVDVNLNNHVFKQYFFETKCRNPNPVPSGCRGIDSGHWNSYCTTTQTFVRALTMEGNQASWRFIRIDTACVCVISRKTENF.

The N-terminal stretch at 1-18 (MSMLCYTLIIVFLIGIWA) is a signal peptide. Positions 19 to 125 (APKSEDNVPL…TLNRNIRAKR (107 aa)) are excised as a propeptide. The segment covering 47-66 (GLKTSRNTDQRHPAPKKAED) has biased composition (basic and acidic residues). Positions 47 to 69 (GLKTSRNTDQRHPAPKKAEDQEL) are disordered. 3 cysteine pairs are disulfide-bonded: Cys-139-Cys-204, Cys-182-Cys-232, and Cys-192-Cys-234. The N-linked (GlcNAc...) asparagine glycan is linked to Asn-148.

The protein belongs to the NGF-beta family. As to quaternary structure, homodimer; non-covalently linked. In terms of tissue distribution, expressed by the venom gland.

The protein resides in the secreted. Functionally, nerve growth factor is important for the development and maintenance of the sympathetic and sensory nervous systems. It stimulates division and differentiation of sympathetic and embryonic sensory neurons as well as basal forebrain cholinergic neurons in the brain. Its relevance in the snake venom is not clear. However, it has been shown to inhibit metalloproteinase-dependent proteolysis of platelet glycoprotein Ib alpha, suggesting a metalloproteinase inhibition to prevent metalloprotease autodigestion and/or protection against prey proteases. Binds a lipid between the two protein chains in the homodimer. The lipid-bound form promotes histamine relase from mouse mast cells, contrary to the lipid-free form. This chain is Venom nerve growth factor, found in Oxyuranus scutellatus scutellatus (Australian taipan).